A 632-amino-acid polypeptide reads, in one-letter code: MKPTNEPKKPFFQSPIILAVLGGILLIFFLRSFNSDGSFSDNFLASSTKNVSYHEIKQLISNNEVENVSIGQTLIKASHKEGNNRVIYIAKRVPDLTLVPLLDEKKINYSGFSESNFFTDMLGWLMPILVILGLWMFMANRMQKNMGGGIFGMGSAKKLINAEKPNVRFNDMAGNEEAKEEVVEIVDFLKYPERYANLGAKIPKGVLLVGPPGTGKTLLAKAVAGEAHVPFFSMGGSSFIEMFVGLGASRVRDLFETAKKQAPSIIFIDEIDAIGKSRAAGGVVSGNDEREQTLNQLLAEMDGFGSENAPVIVLAATNRPEILDPALMRPGRFDRQVLVDKPDFNGRVEILKVHIKGVKLANDVNLQEVAKLTAGLAGADLANIINEAALLAGRNNQKEVRQQHLKEAVERGIAGLEKKSRRISPKEKKIVAYHESGHAVISEMTKGSARVNKVSIIPRGMAALGYTLNTPEENKYLMQKHELIAEIDVLLGGRAAEDVFLEEISTGASNDLERATDIIKGMVSYYGMSSVSGLMVLEKQRNAFLGGGYGSSREFSEKTAEEMDLFIKNLLEERYKHVKQTLSDYREAIEIMVKELFDKEVITGERVREIISEYEVANNLESRLIPLEEQAS.

The Cytoplasmic segment spans residues 1–9 (MKPTNEPKK). A helical membrane pass occupies residues 10-30 (PFFQSPIILAVLGGILLIFFL). At 31–116 (RSFNSDGSFS…INYSGFSESN (86 aa)) the chain is on the periplasmic side. The helical transmembrane segment at 117 to 137 (FFTDMLGWLMPILVILGLWMF) threads the bilayer. Topologically, residues 138–632 (MANRMQKNMG…RLIPLEEQAS (495 aa)) are cytoplasmic. Residues alanine 173, 213 to 217 (GTGKT), and histidine 354 contribute to the ATP site. Position 434 (histidine 434) interacts with Zn(2+). Glutamate 435 is a catalytic residue. Zn(2+)-binding residues include histidine 438 and aspartate 511.

The protein in the central section; belongs to the AAA ATPase family. It in the C-terminal section; belongs to the peptidase M41 family. Homohexamer. It depends on Zn(2+) as a cofactor.

It localises to the cell inner membrane. Functionally, acts as a processive, ATP-dependent zinc metallopeptidase for both cytoplasmic and membrane proteins. Plays a role in the quality control of integral membrane proteins. This is ATP-dependent zinc metalloprotease FtsH from Helicobacter pylori (strain ATCC 700392 / 26695) (Campylobacter pylori).